Consider the following 362-residue polypeptide: Cobalt-precorrin-5B C(1)-methyltransferase (362 aa).

It belongs to the CbiD family.

The catalysed reaction is Co-precorrin-5B + S-adenosyl-L-methionine = Co-precorrin-6A + S-adenosyl-L-homocysteine. It participates in cofactor biosynthesis; adenosylcobalamin biosynthesis; cob(II)yrinate a,c-diamide from sirohydrochlorin (anaerobic route): step 6/10. Catalyzes the methylation of C-1 in cobalt-precorrin-5B to form cobalt-precorrin-6A. The chain is Cobalt-precorrin-5B C(1)-methyltransferase from Burkholderia lata (strain ATCC 17760 / DSM 23089 / LMG 22485 / NCIMB 9086 / R18194 / 383).